We begin with the raw amino-acid sequence, 108 residues long: Cell division topological specificity factor (108 aa).

Belongs to the MinE family.

In terms of biological role, prevents the cell division inhibition by proteins MinC and MinD at internal division sites while permitting inhibition at polar sites. This ensures cell division at the proper site by restricting the formation of a division septum at the midpoint of the long axis of the cell. The sequence is that of Cell division topological specificity factor from Prochlorococcus marinus (strain MIT 9215).